We begin with the raw amino-acid sequence, 264 residues long: Glutamate racemase (264 aa).

Residues 10–11 (DS) and 42–43 (YG) contribute to the substrate site. Catalysis depends on Cys73, which acts as the Proton donor/acceptor. Substrate is bound at residue 74 to 75 (NT). Cys183 acts as the Proton donor/acceptor in catalysis. 184-185 (TH) is a binding site for substrate.

The protein belongs to the aspartate/glutamate racemases family.

The enzyme catalyses L-glutamate = D-glutamate. The protein operates within cell wall biogenesis; peptidoglycan biosynthesis. Provides the (R)-glutamate required for cell wall biosynthesis. The polypeptide is Glutamate racemase (Streptococcus mutans serotype c (strain ATCC 700610 / UA159)).